The chain runs to 883 residues: Aldehyde-alcohol dehydrogenase (883 aa).

The segment at 13-456 (KLVAEKHVDE…DNVSAINLLN (444 aa)) is aldehyde dehydrogenase. NAD(+) contacts are provided by residues 121–126 (ITPTTN), Gly-206, and Gly-224. Catalysis depends on Cys-257, which acts as the Nucleophile. NAD(+) contacts are provided by residues Glu-355, Leu-435, and 438 to 443 (GSYGRN). The linker stretch occupies residues 457 to 464 (IKKVGRRR). Residues Asp-500, Asp-534, 561–565 (GSPMD), 612–613 (TT), Val-625, Lys-634, and Leu-653 each bind NAD(+). 4 residues coordinate Fe cation: Asp-668, His-672, His-736, and His-750.

The protein in the N-terminal section; belongs to the aldehyde dehydrogenase family. It in the C-terminal section; belongs to the iron-containing alcohol dehydrogenase family. Fe(2+) is required as a cofactor.

The catalysed reaction is ethanol + NAD(+) = acetaldehyde + NADH + H(+). It catalyses the reaction an aldehyde + NAD(+) + H2O = a carboxylate + NADH + 2 H(+). Its function is as follows. Has alcohol dehydrogenase activity. Has aldehyde dehydrogenase activity. May play a role in enhancing virulence in mice. May be considered a potential virulence factor. The sequence is that of Aldehyde-alcohol dehydrogenase from Streptococcus pneumoniae serotype 4 (strain ATCC BAA-334 / TIGR4).